Here is a 1273-residue protein sequence, read N- to C-terminus: MGYHNVKYGKKAQRRNYSKTIYDVDLPNLIEIQNQSFDWFLKHGIKELLQDFCPIESYNGDLKIHFDDYFLTPPKYSIEETKIKDISYVAQLFVKTTLENVLTGETKQSNILLTELPLMTSTGTFIINGTERVVVSQIVRSASVYFAGNFDIKLNRTIYSGQVIPSRGAWIEYEEGSKEILYAKLDRSKKIPLSNFIYALGFDSKEAIENVFGKSAILDSVFDKETDMDSDNALVELYSKIRQGEKVPVDTARDFIRTRLFDQKKYDLAKVGRYKFNKKLDVLTRAENTYLACDFVNPENQEIMIAQDELLTKEKIAILKQNRHFLLQEIFDAKHNLENETDEEILAYKKYPQKNELFTKTNIINSRTGEVLVAKDTLVNDDIINHLRHNIHTLDEKVSKFFLGTKDIYQKEADRQGVFNEILEVYTSKDESGKLYNKVKLIGNDQRETKKHITLSDVIASINYYLNLYENVGTVDDIDHLGNRRLRLIGELLKNQFRIGLTRAEKNIKDMISTSKFGEVNGPGDLVNFTFLMSVIKTFFTNSRLSQFMDQINPLAELTQKRRVSALGIGGINRDRAGIEVRDVHNSHYGRLCPIETPEGPSIGLITSLSTYAKVNKYGFIQTPFFKVLQQDGKTTLSRDIDYLTADQEKEEIIASAGFVLDANNSFQDKKIIARSNGETGIFERNQITYADVSPKQIVSVATSSIPFLEHNDASRALMGANMQRQAVPLLIPESPIVGTGVEYRAAKDSGCLIIARESGFVTYVDAQKIIITKKPNQTVSLNGKTLYDTTQEFTYTQAKVLYENNHKEYQAEYTLINFAKSNQDTLVLQKPIVVLGEHINEGDILVSGPSTSQGELALGRNVTVAFMTWEGYNYEDAIIMSEELVKHDVYTSIHIDKYEVQTRELKKGSGQEEITREVPNVGADAIKNLDERGIIIPGSEVKEGDILVGKITPQGNIEPSPSEKLIQIVIGEKAREYKDSSLRVPFGEGGIVQSVHYFSRKNGDVLPAGVNENIRVFIAKKRKINEGDKMAGRHGNKGVISRILPKEDLPYMADGTPIDIMLNPLGVPSRMNIGQILEIHLGMAAKKLGIKVATPVFDGVNDYDLKEIMKEANLEPDGKMVLYDGRTGEPYDSRISVGVMYMVKLSHMVDDKLHARNVGPYTLVTQQPMGGKVQNGGQRFGEMEVWALYAYGAAHTLQEILTVKSDDIVGRNKTYSAIVQGTQLPKPSIPESFRVFIKELQSLGLYVELIKTDTKENEVNKSLIDYKKEGYN.

It belongs to the RNA polymerase beta chain family. As to quaternary structure, the RNAP catalytic core consists of 2 alpha, 1 beta, 1 beta' and 1 omega subunit. When a sigma factor is associated with the core the holoenzyme is formed, which can initiate transcription.

It catalyses the reaction RNA(n) + a ribonucleoside 5'-triphosphate = RNA(n+1) + diphosphate. In terms of biological role, DNA-dependent RNA polymerase catalyzes the transcription of DNA into RNA using the four ribonucleoside triphosphates as substrates. This is DNA-directed RNA polymerase subunit beta from Aster yellows witches'-broom phytoplasma (strain AYWB).